The following is an 895-amino-acid chain: Clathrin interactor EPSIN 2 (895 aa).

The ENTH domain maps to 18–150; sequence KKVLKVPGVE…NDKERIAEVR (133 aa). 3 stretches are compositionally biased toward basic and acidic residues: residues 150–161, 177–236, and 245–257; these read RQKAAANRDKYR, DKYD…RSRS, and RSSEREREDDGHS. The segment at 150-396 is disordered; that stretch reads RQKAAANRDK…PTVTSMSAPT (247 aa). Phosphoserine occurs at positions 270 and 282. Residues 329–348 show a composition bias toward low complexity; sequence AAPEAASPPTGTNTANTTAT. Polar residues-rich tracts occupy residues 349 to 358 and 387 to 396; these read FVNESPSQKV and PTVTSMSAPT. Residues 409–413 carry the Clathrin binding motif; it reads LADVF. 2 disordered regions span residues 436–533 and 758–784; these read AGPA…PQEQ and KQTNTPATSTINMGKAMGSGTGLGRSG. Residues 440–454 are compositionally biased toward low complexity; the sequence is PSFSTSQPSTQSFDD. The ALPHA-ADR binding signature appears at 454–456; the sequence is DPF. 3 stretches are compositionally biased toward polar residues: residues 464–479, 515–533, and 759–769; these read FTSTDTDSTPQQNFGA, PASQNVQPPSNSPGFPQEQ, and QTNTPATSTIN.

It belongs to the epsin family. As to quaternary structure, interacts with clathrin, VTI12, DELTA-ADR and ALPHA-ADR.

It is found in the golgi apparatus. Its subcellular location is the cytoplasmic vesicle. The protein localises to the clathrin-coated vesicle. May have a role in transport via clathrin-coated vesicles from the trans-Golgi network to endosomes. Stimulates clathrin assembly. Binds to membranes enriched in phosphatidylinositol 3-phosphate (PtdIns(3)P). Plays an important role in protein trafficking. This is Clathrin interactor EPSIN 2 (EPSIN2) from Arabidopsis thaliana (Mouse-ear cress).